The sequence spans 291 residues: Protein US2 (291 aa).

An N-acetylglycine; by host modification is found at glycine 2. Positions 223–281 (NKPRPASSRPHPATHPTQRPCFTCMGRPEIPDEPSWQTGDDDPQNPGPPLAVGDEWPPS) are disordered.

The protein belongs to the herpesviridae HHV-1 US2 protein family. In terms of assembly, interacts with host KRT18. Interacts with host MAP3K7; this interaction induces host NF-kappa-B pathway.

The protein resides in the virion. The protein localises to the host cytoplasm. Its subcellular location is the host cell surface. It localises to the host nucleus. Its function is as follows. Plays a role in the activation of the host NF-kappa-B pathway by interacting with and thus activating the component MAP3K7. This chain is Protein US2, found in Human herpesvirus 2 (strain HG52) (HHV-2).